Here is a 243-residue protein sequence, read N- to C-terminus: MKDTLFNESLNKRFCFDEKVAHVFDDMLERSIPYYHEMLNLGAYFIAQNLKENVYHKSLPKPLIYDLGCSTGNFFIALNQQIQQDIELVGIDNSMPMLKKAQEKLKDFNNVRFECMDFLEVKFKEASAFSLLFVLQFVRPMQREVLLKKIYNSLALNGVLLVGEKIMSEDRILDKQMIELYYLYKQNQGYSHNEIAFKREALENVLVPYSLKENIALLESVGFKHVEALFKWVNFTLLVARKT.

Residues Tyr-35, 68–70 (GCS), 92–93 (DN), and Arg-199 contribute to the S-adenosyl-L-methionine site.

This sequence belongs to the class I-like SAM-binding methyltransferase superfamily. Cx-SAM synthase family. Homodimer.

The enzyme catalyses prephenate + S-adenosyl-L-methionine = carboxy-S-adenosyl-L-methionine + 3-phenylpyruvate + H2O. In terms of biological role, catalyzes the conversion of S-adenosyl-L-methionine (SAM) to carboxy-S-adenosyl-L-methionine (Cx-SAM). In Helicobacter pylori (strain J99 / ATCC 700824) (Campylobacter pylori J99), this protein is Carboxy-S-adenosyl-L-methionine synthase.